A 281-amino-acid polypeptide reads, in one-letter code: DegV domain-containing protein SCO2569 (281 aa).

Positions 5 to 280 constitute a DegV domain; it reads VAIVTDSTAY…PGLLGVVVSS (276 aa). The hexadecanoate site is built by Thr-62 and Ser-95.

May bind long-chain fatty acids, such as palmitate, and may play a role in lipid transport or fatty acid metabolism. This chain is DegV domain-containing protein SCO2569, found in Streptomyces coelicolor (strain ATCC BAA-471 / A3(2) / M145).